A 280-amino-acid polypeptide reads, in one-letter code: UPF0328 protein ECU06_0020/ECU06_1700 (280 aa).

It belongs to the UPF0328 family.

The protein is UPF0328 protein ECU06_0020/ECU06_1700 of Encephalitozoon cuniculi (strain GB-M1) (Microsporidian parasite).